We begin with the raw amino-acid sequence, 119 residues long: Beta-2-microglobulin (119 aa).

The signal sequence occupies residues Met-1 to Ala-20. Residues Pro-25–Lys-114 enclose the Ig-like C1-type domain. The cysteines at positions 45 and 100 are disulfide-linked.

It belongs to the beta-2-microglobulin family. Heterodimer of an alpha chain and a beta chain. Beta-2-microglobulin is the beta-chain of major histocompatibility complex class I molecules.

The protein localises to the secreted. Functionally, component of the class I major histocompatibility complex (MHC). Involved in the presentation of peptide antigens to the immune system. The sequence is that of Beta-2-microglobulin (B2M) from Alouatta seniculus (Red howler monkey).